Reading from the N-terminus, the 170-residue chain is Adenine phosphoribosyltransferase (170 aa).

The protein belongs to the purine/pyrimidine phosphoribosyltransferase family. Homodimer.

Its subcellular location is the cytoplasm. The catalysed reaction is AMP + diphosphate = 5-phospho-alpha-D-ribose 1-diphosphate + adenine. Its pathway is purine metabolism; AMP biosynthesis via salvage pathway; AMP from adenine: step 1/1. Functionally, catalyzes a salvage reaction resulting in the formation of AMP, that is energically less costly than de novo synthesis. This Bacillus subtilis (strain 168) protein is Adenine phosphoribosyltransferase.